Reading from the N-terminus, the 298-residue chain is 2-dehydropantoate 2-reductase (298 aa).

NADP(+)-binding positions include 7–12, N98, and A124; that span reads GGGSVG. N98 provides a ligand contact to substrate. Residue K179 is the Proton donor of the active site. Substrate contacts are provided by N183, N187, N197, and S246. NADP(+) is bound at residue E258.

It belongs to the ketopantoate reductase family.

It localises to the cytoplasm. The catalysed reaction is (R)-pantoate + NADP(+) = 2-dehydropantoate + NADPH + H(+). The protein operates within cofactor biosynthesis; (R)-pantothenate biosynthesis; (R)-pantoate from 3-methyl-2-oxobutanoate: step 2/2. In terms of biological role, catalyzes the NADPH-dependent reduction of ketopantoate into pantoic acid. The sequence is that of 2-dehydropantoate 2-reductase (panE) from Bacillus subtilis (strain 168).